A 357-amino-acid chain; its full sequence is Peptide chain release factor 1 (357 aa).

Q234 carries the post-translational modification N5-methylglutamine.

This sequence belongs to the prokaryotic/mitochondrial release factor family. In terms of processing, methylated by PrmC. Methylation increases the termination efficiency of RF1.

The protein localises to the cytoplasm. Peptide chain release factor 1 directs the termination of translation in response to the peptide chain termination codons UAG and UAA. This chain is Peptide chain release factor 1, found in Lactococcus lactis subsp. cremoris (strain SK11).